Here is a 487-residue protein sequence, read N- to C-terminus: Cytochrome P450 2C21 (487 aa).

C432 serves as a coordination point for heme.

The protein belongs to the cytochrome P450 family. Heme serves as cofactor. As to expression, liver.

The protein localises to the endoplasmic reticulum membrane. Its subcellular location is the microsome membrane. It catalyses the reaction an organic molecule + reduced [NADPH--hemoprotein reductase] + O2 = an alcohol + oxidized [NADPH--hemoprotein reductase] + H2O + H(+). Its function is as follows. Cytochromes P450 are a group of heme-thiolate monooxygenases. In liver microsomes, this enzyme is involved in an NADPH-dependent electron transport pathway. It oxidizes a variety of structurally unrelated compounds, including steroids, fatty acids, and xenobiotics. Showed testosterone hydrolase activity. This chain is Cytochrome P450 2C21 (CYP2C21), found in Canis lupus familiaris (Dog).